Reading from the N-terminus, the 2263-residue chain is Collagen alpha-6(VI) chain (2263 aa).

The N-terminal stretch at 1-19 (MMLLILFLVIICSHISVNQ) is a signal peptide. Residues 20–1391 (DSGPEYADVV…TCCCLFCKCI (1372 aa)) form a nonhelical region region. VWFA domains lie at 27–206 (DVVF…IKDV), 229–411 (DVVF…RNQI), 436–606 (DIYL…RNQV), 622–791 (DIMF…EDDL), and 809–982 (DVVF…FSDV). 5 N-linked (GlcNAc...) asparagine glycosylation sites follow: N198, N275, N288, N347, and N520. 2 N-linked (GlcNAc...) asparagine glycosylation sites follow: N930 and N988. VWFA domains follow at residues 1000–1171 (DLVF…NKRI) and 1187–1371 (DVVV…GSRL). An N-linked (GlcNAc...) asparagine glycan is attached at N1290. Residues 1392-1725 (GGDGTMGDPG…GRKGVKGAKG (334 aa)) form a triple-helical region region. The segment at 1397–1723 (MGDPGPPGKR…PPGRKGVKGA (327 aa)) is disordered. Over residues 1498–1508 (TPGDRGAKGLR) the composition is skewed to basic and acidic residues. The Cell attachment site signature appears at 1508–1510 (RGD). Basic residues predominate over residues 1547–1559 (SRRKTAAHGRRGH). Over residues 1680-1689 (GDPGGPGETG) the composition is skewed to gly residues. The interval 1726–2263 (LASFSTCELI…MIESAPKQHD (538 aa)) is nonhelical region. VWFA domains follow at residues 1757–1937 (ELVF…ERLQ) and 1965–2166 (DAAF…INSI).

Belongs to the type VI collagen family. In terms of assembly, trimers composed of three different chains: alpha-1(VI), alpha-2(VI), and alpha-3(VI) or alpha-5(VI) or alpha-6(VI). In terms of processing, prolines at the third position of the tripeptide repeating unit (G-X-Y) are hydroxylated in some or all of the chains.

The protein resides in the secreted. It is found in the extracellular space. The protein localises to the extracellular matrix. Its function is as follows. Collagen VI acts as a cell-binding protein. The chain is Collagen alpha-6(VI) chain (COL6A6) from Homo sapiens (Human).